The sequence spans 5068 residues: Protein piccolo (5068 aa).

Residues 1 to 20 are compositionally biased toward low complexity; it reads MGNEASLEGEGLPEGLAAAA. 2 disordered regions span residues 1–143 and 173–524; these read MGNE…DFKE and FDLI…QAPA. Pro residues predominate over residues 93–102; that stretch reads PGKPPDPGRP. Composition is skewed to basic and acidic residues over residues 111 to 122, 133 to 143, and 185 to 199; these read RTTDTFRSEQKL, KESKSRTDFKE, and ETTK…DQGK. At Ser-212 the chain carries Phosphoserine. A compositionally biased stretch (polar residues) spans 232-241; it reads PSKSVSSQQA. The span at 252-279 shows a compositional bias: low complexity; the sequence is AKPSQQSPAQTPAQQAKPVAQQPGPAKA. A compositionally biased stretch (polar residues) spans 319 to 334; sequence TSLQQPGPKSLAQTPG. 2 stretches are compositionally biased toward pro residues: residues 391-407 and 416-487; these read PTKP…PQPQ and PQQP…PQPQ. Positions 401 to 500 are 10 X 10 AA tandem approximate repeats of P-A-K-P-Q-P-Q-Q-P-X; that stretch reads PAKPQPQQPV…LGKPSAQQPS (100 aa). Positions 495–508 are enriched in polar residues; sequence SAQQPSKSISQTVT. The span at 515-524 shows a compositional bias: low complexity; it reads PPTSAAQAPA. A C4-type zinc finger spans residues 532 to 556; the sequence is CPLCNTTELLLHTPEKANFNTCTEC. Disordered regions lie at residues 594-867, 883-1005, 1057-1345, and 1364-1803; these read AAIP…TVTG, LIST…TELN, LGDM…PSDL, and VGEK…SDPE. Positions 610-625 are enriched in polar residues; it reads QPATASKSPVPSQQAS. Over residues 626-644 the composition is skewed to basic and acidic residues; it reads PKKELPSKQDSPKAPESKK. Residues 709–738 show a composition bias toward low complexity; the sequence is SPSSAAATSKPAILSSQVQAQAQVTTAPPL. Over residues 782–795 the composition is skewed to basic and acidic residues; sequence ESKDPVQKKEEPKK. Residues 809–830 are compositionally biased toward low complexity; sequence VPKGSPTPSGTRPTTGQATPQS. Phosphoserine is present on residues Ser-844 and Ser-856. Composition is skewed to polar residues over residues 856–865 and 883–893; these read SQPTTPQETV and LISTAGQQAPH. Position 860 is a phosphothreonine (Thr-860). The segment at 997–1020 adopts a C4-type zinc-finger fold; sequence CPLCRTELNVGSQDPPNFNTCTEC. Over residues 1073-1085 the composition is skewed to pro residues; that stretch reads SPVPAPAEPPPQK. A compositionally biased stretch (basic and acidic residues) spans 1097–1116; the sequence is KETEVKAETEKQIPEKETPS. Residue Thr-1120 is modified to Phosphothreonine. Composition is skewed to basic and acidic residues over residues 1144–1165, 1172–1186, 1244–1253, and 1262–1283; these read PEKK…KKPP, LEEK…KLPP, PKDRQKESRD, and TAKE…DKSD. Polar residues predominate over residues 1290–1306; it reads PKSPQGLSDTGYSSDGI. Phosphoserine is present on residues Ser-1292, Ser-1302, Ser-1303, Ser-1332, Ser-1334, Ser-1337, Ser-1338, and Ser-1341. The span at 1319–1333 shows a compositional bias: basic and acidic residues; sequence SDEKDLLKGLKKDSF. Over residues 1334–1343 the composition is skewed to low complexity; it reads SQESSPSSPS. Residues 1374–1392 show a composition bias toward polar residues; that stretch reads PQKVSPEQPQDQQKTQTPS. Positions 1405–1444 are enriched in basic and acidic residues; it reads KESQEKKVTSKKDSAQGFPSRKEHKENPELVDDLSPRRAS. Residues Ser-1439, Ser-1451, Ser-1452, Ser-1454, Ser-1457, Ser-1481, Ser-1484, Ser-1505, and Ser-1507 each carry the phosphoserine modification. Over residues 1499 to 1511 the composition is skewed to acidic residues; it reads SADEDASGSEDEE. Thr-1552 is subject to Phosphothreonine. 3 positions are modified to phosphoserine: Ser-1553, Ser-1563, and Ser-1575. A compositionally biased stretch (acidic residues) spans 1566–1575; the sequence is DEDDETFDES. Basic and acidic residues predominate over residues 1576 to 1587; that stretch reads PELKFRETKSQE. A compositionally biased stretch (polar residues) spans 1606-1624; sequence ELNSTVTDKYSAESSQKKT. Over residues 1628–1638 the composition is skewed to acidic residues; that stretch reads FDEEPELEMES. Residue Ser-1638 is modified to Phosphoserine. A Phosphothreonine modification is found at Thr-1640. 2 positions are modified to phosphoserine: Ser-1642 and Ser-1647. Positions 1650 to 1667 are enriched in polar residues; that stretch reads EGSSSLHASSFTPGTSPT. Residues 1707 to 1720 are compositionally biased toward acidic residues; it reads DSSEEEELREEEEL. Ser-1708 and Ser-1709 each carry phosphoserine. A compositionally biased stretch (basic and acidic residues) spans 1721 to 1734; it reads LKEQEKQRELEQQQ. A Phosphothreonine modification is found at Thr-1760. Ser-1766 is modified (phosphoserine). Positions 1775–1790 are enriched in basic and acidic residues; it reads EELRQAAEMEELHRSS. Ser-1795, Ser-1800, Ser-1808, and Ser-1829 each carry phosphoserine. Disordered regions lie at residues 2104–2126 and 2261–2377; these read PSES…ISSV and EAEL…AAAA. Positions 2109–2126 are enriched in low complexity; the sequence is TSVPPSDTPSLTSSISSV. Residues 2277–2291 show a composition bias toward polar residues; sequence TPSSQTKEQPGSPHS. Residues 2334–2368 are compositionally biased toward pro residues; sequence QPPPPPPPPPPPPPPPPPPPPPPLPPATSPKPPTY. Residue Ser-2495 is modified to Phosphoserine. The O-linked (GlcNAc) threonine glycan is linked to Thr-2686. The O-linked (GlcNAc) serine glycan is linked to Ser-2960. Thr-2998 carries the phosphothreonine modification. Disordered stretches follow at residues 3334 to 3443 and 3490 to 3556; these read KEEK…SKVS and KGGS…LYSP. Ser-3358 is subject to Phosphoserine. A compositionally biased stretch (basic and acidic residues) spans 3361–3370; sequence DDPRNLKKIV. Ser-3372 carries the phosphoserine modification. Phosphothreonine occurs at positions 3376 and 3403. Acidic residues predominate over residues 3403-3412; sequence TDDEDQDEWD. A compositionally biased stretch (polar residues) spans 3495–3507; the sequence is GCQTETDPDTQSP. Phosphoserine occurs at positions 3506, 3514, 3545, 3549, 3555, 3558, 3561, 3582, 3608, 3610, and 3616. Disordered stretches follow at residues 3576–3679 and 3760–3797; these read PLPD…RRRM and DYMS…QFIP. Polar residues-rich tracts occupy residues 3636 to 3645 and 3661 to 3673; these read KGSQTTSGTQ and STGT…TMGT. Residue Ser-3763 is modified to Phosphoserine. Basic and acidic residues predominate over residues 3773-3785; sequence SRVESQHGIERPR. Over residues 3787 to 3797 the composition is skewed to polar residues; it reads APQTEFSQFIP. A phosphoserine mark is found at Ser-4016, Ser-4042, and Ser-4132. Disordered regions lie at residues 4207–4231 and 4254–4273; these read ADKP…GLDL and VSFG…LPIS. The segment covering 4210-4231 has biased composition (low complexity); it reads PYSSGSRSRPSSRPSSVYGLDL. The span at 4257–4273 shows a compositional bias: polar residues; that stretch reads GHSSSSARTKPTSLPIS. Phosphoserine is present on residues Ser-4286, Ser-4290, Ser-4293, Ser-4322, and Ser-4358. The disordered stretch occupies residues 4317-4339; that stretch reads RDQFGSSHSLPEVQQHMREESRT. Residues 4424–4518 enclose the PDZ domain; sequence RIKITRDSKD…EAEICVRLDL (95 aa). The segment at 4574–4620 is disordered; sequence KGAHAHSGPTSAGSSSVPSPGQPGSPSVSKKKHGGSKPTDVSKTASH. Residues 4578-4601 are compositionally biased toward low complexity; the sequence is AHSGPTSAGSSSVPSPGQPGSPSV. Ser-4592 is subject to Phosphoserine. A C2 1 domain is found at 4622-4751; the sequence is ITGEIQLQIN…SHLDNTPRWY (130 aa). Residues Asp-4651 and Asp-4657 each contribute to the Ca(2+) site. Ser-4706 bears the Phosphoserine mark. Ca(2+) is bound by residues Asp-4721, Asp-4723, Ser-4726, and Asp-4729. Disordered stretches follow at residues 4758-4834 and 4857-4891; these read ESIE…SVAQ and QPTK…SEGS. 2 stretches are compositionally biased toward low complexity: residues 4766 to 4778 and 4805 to 4815; these read HSSQ…PKPS and SSPGSSKSSSE. Over residues 4823–4834 the composition is skewed to polar residues; sequence PSRSQSKTSVAQ. The segment covering 4870-4891 has biased composition (low complexity); the sequence is SVSTGSSGSSVGSGYSVDSEGS. One can recognise a C2 2 domain in the interval 4933–5058; it reads VMGEIKLALK…DLRKRIVNWH (126 aa).

In terms of assembly, interacts with BSN, ERC2/CAST1, RIMS1 and UNC13A. Interacts (via C-terminus) with TRIO (via N-terminus). Interacts with CTBP1. Interacts with SIAH1; this interaction negatively regulates SIAH1 E3 ligase activity. Directly interacts with GIT1 and GIT2. Ca(2+) serves as cofactor. Highly expressed in brain. Moderately expressed in pituitary gland and pancreatic islets. Low levels found in stomach.

Its subcellular location is the presynaptic active zone. In terms of biological role, scaffold protein of the presynaptic cytomatrix at the active zone (CAZ) which is the place in the synapse where neurotransmitter is released. After synthesis, participates in the formation of Golgi-derived membranous organelles termed Piccolo-Bassoon transport vesicles (PTVs) that are transported along axons to sites of nascent synaptic contacts. At the presynaptic active zone, regulates the spatial organization of synaptic vesicle cluster, the protein complexes that execute membrane fusion and compensatory endocytosis. Organizes as well the readily releasable pool of synaptic vesicles and safeguards a fraction of them to be not immediately available for action potential-induced release. Also functions in processes other than assembly such as the regulation of specific presynaptic protein ubiquitination by interacting with SIAH1 or the regulation of presynaptic autophagy. Also mediates synapse to nucleus communication leading to reconfiguration of gene expression by associating with the transcriptional corepressor CTBP1 and by subsequently reducing the size of its pool available for nuclear import. The polypeptide is Protein piccolo (Mus musculus (Mouse)).